The following is a 385-amino-acid chain: dTDP-4-dehydro-2,3,6-trideoxy-D-glucose 4-aminotransferase (385 aa).

K182 carries the N6-(pyridoxal phosphate)lysine modification.

It belongs to the DegT/DnrJ/EryC1 family. As to quaternary structure, homodimer. The cofactor is pyridoxal 5'-phosphate.

The catalysed reaction is dTDP-4-amino-2,3,4,6-tetradeoxy-alpha-D-erythro-hexopyranose + 2-oxoglutarate = dTDP-4-dehydro-2,3,6-trideoxy-alpha-D-hexopyranose + L-glutamate. Its function is as follows. Involved in the biosynthesis of forosamine ((4-dimethylamino)-2,3,4,6-tetradeoxy-alpha-D-threo-hexopyranose), a highly deoxygenated sugar component of several bioactive natural products such as the insecticidal spinosyns A and D. In the presence of pyridoxal 5'-phosphate (PLP) and alpha-ketoglutarate, catalyzes the C-4 transamination of dTDP-4-keto-2,3,6-trideoxy-alpha-D-glucose to yield dTDP-4-amino-2,3,4,6-tetradeoxy-alpha-D-glucose. It can also use pyruvate, but less efficiently than alpha-ketoglutarate. Also able to catalyze the C-4 transamination of dTDP-4-keto-2,6-dideoxy-alpha-D-glucose to yield dTDP-4-amino-2,4,6-trideoxy-D-glucose. The chain is dTDP-4-dehydro-2,3,6-trideoxy-D-glucose 4-aminotransferase from Saccharopolyspora spinosa.